A 151-amino-acid chain; its full sequence is uncharacterized protein (151 aa).

Residues 3–151 form the N-acetyltransferase domain; that stretch reads IKIDDLTGRQ…PNSVFMTKKL (149 aa).

It belongs to the acetyltransferase family.

This is an uncharacterized protein from Bacillus subtilis (strain 168).